A 223-amino-acid polypeptide reads, in one-letter code: Ribose-5-phosphate isomerase A (223 aa).

Residues 32–35, 85–88, and 98–101 each bind substrate; these read TGST, DGAD, and KGGG. Catalysis depends on glutamate 107, which acts as the Proton acceptor. Lysine 125 contributes to the substrate binding site.

Belongs to the ribose 5-phosphate isomerase family. In terms of assembly, homodimer.

The enzyme catalyses aldehydo-D-ribose 5-phosphate = D-ribulose 5-phosphate. Its pathway is carbohydrate degradation; pentose phosphate pathway; D-ribose 5-phosphate from D-ribulose 5-phosphate (non-oxidative stage): step 1/1. In terms of biological role, catalyzes the reversible conversion of ribose-5-phosphate to ribulose 5-phosphate. This Pseudomonas aeruginosa (strain LESB58) protein is Ribose-5-phosphate isomerase A.